Consider the following 310-residue polypeptide: MARFSSKNLTKLFQYLVLSLLSPVAFGNFNIEVDTRNKVLNDAAINFYGQNIGIITDGERRVFGITDGPLKEACSKVQGGKPGYVWVRSPTPANLYEIHNWRQVLRVLTAYDARIVGIEQKPEMVATQTYKNRSDHPAKVSGMITQSVSNTIENKWIEMNQFSITATVSCKVKAAEIGLSMGYERSWGKEDTNSTTTMLGQQTGFEVELPPGGNCTAVLSATKGSMKIDVGYRATLEGDCAVDFPNTWNGHHYWCYPIGLVQDVGNLKKHIDCRELITIGYYSDAHVTIENLGKKKNKKTKKPPRKTKMN.

The first 27 residues, 1–27 (MARFSSKNLTKLFQYLVLSLLSPVAFG), serve as a signal peptide directing secretion.

The protein belongs to the megalysin family. Post-translationally, contains 3 disulfide bonds. As to expression, expressed by the venom apparatus.

Its subcellular location is the secreted. The protein resides in the target cell membrane. Its function is as follows. May function as a large pore-forming protein. This Megalopyge opercularis (Southern flannel moth) protein is U-megalopygitoxin(8)-Mo15.